The chain runs to 120 residues: NAD(P)H-quinone oxidoreductase subunit 3, chloroplastic (120 aa).

3 helical membrane passes run 9–29, 64–84, and 88–108; these read FFWA…FISG, MFAL…PWAM, and VLGV…IIGL.

The protein belongs to the complex I subunit 3 family. NDH is composed of at least 16 different subunits, 5 of which are encoded in the nucleus.

The protein localises to the plastid. It is found in the chloroplast thylakoid membrane. The enzyme catalyses a plastoquinone + NADH + (n+1) H(+)(in) = a plastoquinol + NAD(+) + n H(+)(out). It carries out the reaction a plastoquinone + NADPH + (n+1) H(+)(in) = a plastoquinol + NADP(+) + n H(+)(out). Its function is as follows. NDH shuttles electrons from NAD(P)H:plastoquinone, via FMN and iron-sulfur (Fe-S) centers, to quinones in the photosynthetic chain and possibly in a chloroplast respiratory chain. The immediate electron acceptor for the enzyme in this species is believed to be plastoquinone. Couples the redox reaction to proton translocation, and thus conserves the redox energy in a proton gradient. This Atropa belladonna (Belladonna) protein is NAD(P)H-quinone oxidoreductase subunit 3, chloroplastic.